Consider the following 339-residue polypeptide: Uroporphyrinogen decarboxylase (339 aa).

Residues 21-25 (RQAGR), Asp-71, Tyr-147, Ser-202, and His-315 each bind substrate.

This sequence belongs to the uroporphyrinogen decarboxylase family. Homodimer.

It is found in the cytoplasm. The enzyme catalyses uroporphyrinogen III + 4 H(+) = coproporphyrinogen III + 4 CO2. It functions in the pathway porphyrin-containing compound metabolism; protoporphyrin-IX biosynthesis; coproporphyrinogen-III from 5-aminolevulinate: step 4/4. In terms of biological role, catalyzes the decarboxylation of four acetate groups of uroporphyrinogen-III to yield coproporphyrinogen-III. The protein is Uroporphyrinogen decarboxylase of Helicobacter pylori (strain P12).